A 144-amino-acid chain; its full sequence is Large ribosomal subunit protein uL11 (144 aa).

The protein belongs to the universal ribosomal protein uL11 family. In terms of assembly, part of the ribosomal stalk of the 50S ribosomal subunit. Interacts with L10 and the large rRNA to form the base of the stalk. L10 forms an elongated spine to which L12 dimers bind in a sequential fashion forming a multimeric L10(L12)X complex. Post-translationally, one or more lysine residues are methylated.

Functionally, forms part of the ribosomal stalk which helps the ribosome interact with GTP-bound translation factors. The polypeptide is Large ribosomal subunit protein uL11 (Rhodococcus opacus (strain B4)).